We begin with the raw amino-acid sequence, 183 residues long: Disulfide bond formation protein B 2 (183 aa).

The Cytoplasmic portion of the chain corresponds to 1–9 (MSLACSRSL). The chain crosses the membrane as a helical span at residues 10 to 26 (FFMAFTAGILALGASYY). At 27–44 (LEYAVGLVPCSLCLVQRL) the chain is on the periplasmic side. Cys-36 and Cys-39 are oxidised to a cystine. Residues 45–61 (FMSVLTLCCGLAAVHGP) form a helical membrane-spanning segment. The Cytoplasmic segment spans residues 62–68 (QRVGLSL). Residues 69 to 85 (YWMVTLLSSLGGTTAAW) traverse the membrane as a helical segment. Residues 86 to 142 (RQVLFQSDSLQELAHCAPNPEEMFSSLPWLCALMRMFNDTADCAELSWTLFDLSIPE) are Periplasmic-facing. Cys-101 and Cys-128 form a disulfide bridge. Residues 143-161 (WSLLFFVGMSILAVYQLLR) form a helical membrane-spanning segment. Residues 162 to 183 (QVWMALQRPLSGQPSHPALVRD) lie on the Cytoplasmic side of the membrane.

The protein belongs to the DsbB family.

It localises to the cell inner membrane. Required for disulfide bond formation in some periplasmic proteins. Acts by oxidizing the DsbA protein. This chain is Disulfide bond formation protein B 2, found in Pseudomonas fluorescens (strain Pf0-1).